The following is a 561-amino-acid chain: Chaperonin GroEL 1 (561 aa).

ATP contacts are provided by residues 29-32 (TMGP), 86-90 (DGTTT), Gly413, and Asp495.

This sequence belongs to the chaperonin (HSP60) family. As to quaternary structure, forms a cylinder of 14 subunits composed of two heptameric rings stacked back-to-back. Interacts with the co-chaperonin GroES.

Its subcellular location is the cytoplasm. The catalysed reaction is ATP + H2O + a folded polypeptide = ADP + phosphate + an unfolded polypeptide.. In terms of biological role, together with its co-chaperonin GroES, plays an essential role in assisting protein folding. The GroEL-GroES system forms a nano-cage that allows encapsulation of the non-native substrate proteins and provides a physical environment optimized to promote and accelerate protein folding. The protein is Chaperonin GroEL 1 of Trichodesmium erythraeum (strain IMS101).